A 953-amino-acid polypeptide reads, in one-letter code: TPR repeat-containing protein ZIP4 (953 aa).

Residues 129-162 form a TPR 1 repeat; it reads ASFFHRSGLAWLDLGRVDLASACFEKATPLVSAA. Residues 248–269 are disordered; it reads AASPSSSSPRTPPYGGATPKTP. TPR repeat units lie at residues 432–465 and 473–506; these read HALL…VSRD and ADCF…EPNI. The interval 924–953 is disordered; sequence RVSGDEPDECSQEEAPKASISGSMSQPVLV. The segment covering 943–953 has biased composition (polar residues); that stretch reads ISGSMSQPVLV.

It localises to the nucleus. It is found in the chromosome. Its function is as follows. Required for crossover formation, complete synapsis of homologous chromosomes and bivalent formation during meiosis. Is specific to recombination events resulting in interference-sensitive crossovers (class I meiotic crossover) and works cooperatively with MER3 to promote crossovers. The protein is TPR repeat-containing protein ZIP4 of Oryza sativa subsp. indica (Rice).